Reading from the N-terminus, the 114-residue chain is Cytochrome b-c1 complex subunit 1, mitochondrial (114 aa).

The residue at position 31 (Lys-31) is an N6-acetyllysine.

It belongs to the peptidase M16 family. UQCRC1/QCR1 subfamily. In terms of assembly, component of the ubiquinol-cytochrome c oxidoreductase (cytochrome b-c1 complex, complex III, CIII), a multisubunit enzyme composed of 11 subunits. The complex is composed of 3 respiratory subunits cytochrome b, cytochrome c1 and Rieske protein UQCRFS1, 2 core protein subunits UQCRC1/QCR1 and UQCRC2/QCR2, and 6 low-molecular weight protein subunits UQCRH/QCR6, UQCRB/QCR7, UQCRQ/QCR8, UQCR10/QCR9, UQCR11/QCR10 and subunit 9, the cleavage product of Rieske protein UQCRFS1. The complex exists as an obligatory dimer and forms supercomplexes (SCs) in the inner mitochondrial membrane with NADH-ubiquinone oxidoreductase (complex I, CI) and cytochrome c oxidase (complex IV, CIV), resulting in different assemblies (supercomplex SCI(1)III(2)IV(1) and megacomplex MCI(2)III(2)IV(2)). Interacts with UQCC6. Interacts with STMP1.

It is found in the mitochondrion inner membrane. Component of the ubiquinol-cytochrome c oxidoreductase, a multisubunit transmembrane complex that is part of the mitochondrial electron transport chain which drives oxidative phosphorylation. The respiratory chain contains 3 multisubunit complexes succinate dehydrogenase (complex II, CII), ubiquinol-cytochrome c oxidoreductase (cytochrome b-c1 complex, complex III, CIII) and cytochrome c oxidase (complex IV, CIV), that cooperate to transfer electrons derived from NADH and succinate to molecular oxygen, creating an electrochemical gradient over the inner membrane that drives transmembrane transport and the ATP synthase. The cytochrome b-c1 complex catalyzes electron transfer from ubiquinol to cytochrome c, linking this redox reaction to translocation of protons across the mitochondrial inner membrane, with protons being carried across the membrane as hydrogens on the quinol. In the process called Q cycle, 2 protons are consumed from the matrix, 4 protons are released into the intermembrane space and 2 electrons are passed to cytochrome c. The 2 core subunits UQCRC1/QCR1 and UQCRC2/QCR2 are homologous to the 2 mitochondrial-processing peptidase (MPP) subunits beta-MPP and alpha-MPP respectively, and they seem to have preserved their MPP processing properties. May be involved in the in situ processing of UQCRFS1 into the mature Rieske protein and its mitochondrial targeting sequence (MTS)/subunit 9 when incorporated into complex III. Seems to play an important role in the maintenance of proper mitochondrial function in nigral dopaminergic neurons. This chain is Cytochrome b-c1 complex subunit 1, mitochondrial, found in Mesocricetus auratus (Golden hamster).